The following is a 589-amino-acid chain: Glucose starvation modulator protein 1 (589 aa).

Residues 20-48 (CVFCHQKHLQCSNERPCKNCVKRNIGHEC) constitute a DNA-binding region (zn(2)-C6 fungal-type). Disordered regions lie at residues 59–90 (LTGN…PSVA), 218–240 (NNSN…NPEP), and 340–362 (ANGQ…PGNG). Residues 80-90 (TPITASSPSVA) are compositionally biased toward polar residues. Positions 347–357 (LLDHNKDDSRK) are enriched in basic and acidic residues. The region spanning 471–542 (SLLDYKKLVE…FKFFKNIAVN (72 aa)) is the PAS domain.

Belongs to the ERT1/acuK family.

Its subcellular location is the nucleus. Transcription factor which regulates nonfermentable carbon utilization. In Candida tropicalis (strain ATCC MYA-3404 / T1) (Yeast), this protein is Glucose starvation modulator protein 1 (GSM1).